The primary structure comprises 465 residues: ATP synthase subunit beta (465 aa).

Residue 155-162 participates in ATP binding; sequence GGAGVGKT.

Belongs to the ATPase alpha/beta chains family. As to quaternary structure, F-type ATPases have 2 components, CF(1) - the catalytic core - and CF(0) - the membrane proton channel. CF(1) has five subunits: alpha(3), beta(3), gamma(1), delta(1), epsilon(1). CF(0) has three main subunits: a(1), b(2) and c(9-12). The alpha and beta chains form an alternating ring which encloses part of the gamma chain. CF(1) is attached to CF(0) by a central stalk formed by the gamma and epsilon chains, while a peripheral stalk is formed by the delta and b chains.

It localises to the cell membrane. The catalysed reaction is ATP + H2O + 4 H(+)(in) = ADP + phosphate + 5 H(+)(out). In terms of biological role, produces ATP from ADP in the presence of a proton gradient across the membrane. The catalytic sites are hosted primarily by the beta subunits. The chain is ATP synthase subunit beta from Buchnera aphidicola subsp. Baizongia pistaciae (strain Bp).